The chain runs to 387 residues: Protein PHYTOCHROME KINASE SUBSTRATE 3 (387 aa).

Disordered stretches follow at residues 1–21, 74–128, and 242–271; these read MDAE…PQLL, HEKE…CNSQ, and LSTK…ASVA. The span at 12-21 shows a compositional bias: polar residues; the sequence is QISSYKPQLL. The segment covering 74 to 83 has biased composition (basic and acidic residues); sequence HEKENTHDHP. Residues 114 to 128 show a composition bias toward polar residues; the sequence is HGTPSVRSESSCNSQ. A compositionally biased stretch (low complexity) spans 242–261; sequence LSTKNNNHNNNGNNSSMSSN.

Belongs to the PKS family.

In terms of biological role, probably involved in the phytochrome signaling pathway. The protein is Protein PHYTOCHROME KINASE SUBSTRATE 3 (PKS3) of Arabidopsis thaliana (Mouse-ear cress).